The primary structure comprises 142 residues: Ornithine decarboxylase antizyme (142 aa).

Positions 1–19 (MSSSIVLSNNNSNSNSMSM) are enriched in low complexity. The segment at 1–34 (MSSSIVLSNNNSNSNSMSMIGQSPPCCSDVPNTP) is disordered.

Belongs to the ODC antizyme family. Interacts with ODC1 and thereby sterically blocks ODC homodimerization.

Functionally, ornithine decarboxylase (ODC) antizyme protein that negatively regulates ODC activity and intracellular polyamine biosynthesis and uptake in response to increased intracellular polyamine levels. Binds to ODC monomers, inhibiting the assembly of the functional ODC homodimer, and targets the monomers for ubiquitin-independent proteolytic destruction by the 26S proteasome. This chain is Ornithine decarboxylase antizyme, found in Pristionchus pacificus (Parasitic nematode).